The sequence spans 482 residues: Glutamyl-tRNA(Gln) amidotransferase subunit A (482 aa).

Residues Lys-74 and Ser-149 each act as charge relay system in the active site. The active-site Acyl-ester intermediate is Ser-173.

The protein belongs to the amidase family. GatA subfamily. In terms of assembly, heterotrimer of A, B and C subunits.

It catalyses the reaction L-glutamyl-tRNA(Gln) + L-glutamine + ATP + H2O = L-glutaminyl-tRNA(Gln) + L-glutamate + ADP + phosphate + H(+). Functionally, allows the formation of correctly charged Gln-tRNA(Gln) through the transamidation of misacylated Glu-tRNA(Gln) in organisms which lack glutaminyl-tRNA synthetase. The reaction takes place in the presence of glutamine and ATP through an activated gamma-phospho-Glu-tRNA(Gln). This chain is Glutamyl-tRNA(Gln) amidotransferase subunit A, found in Prochlorococcus marinus (strain MIT 9215).